The sequence spans 169 residues: uncharacterized protein (169 aa).

The next 3 membrane-spanning stretches (helical) occupy residues 25–45 (ALMG…MSYF), 57–77 (FFWV…FGVF), and 91–111 (LFLI…FLMV).

It belongs to the major facilitator superfamily. Allantoate permease family.

The protein resides in the membrane. This is an uncharacterized protein from Saccharomyces cerevisiae (strain ATCC 204508 / S288c) (Baker's yeast).